Here is a 437-residue protein sequence, read N- to C-terminus: Chromosomal replication initiator protein DnaA (437 aa).

Residues 1 to 67 (MKNKIIASLK…KVVKDILGKD (67 aa)) form a domain I, interacts with DnaA modulators region. The tract at residues 67-97 (DATYEITFKEIPYETKVESGPLIKKRPLLIT) is domain II. The interval 98–313 (PLNPKYTFEN…GAILRLIAYR (216 aa)) is domain III, AAA+ region. Residues Gly-141, Gly-143, Lys-144, and Thr-145 each coordinate ATP. Residues 314 to 437 (NLYGTLNLSI…SKGFAQGESM (124 aa)) are domain IV, binds dsDNA.

This sequence belongs to the DnaA family. In terms of assembly, oligomerizes as a right-handed, spiral filament on DNA at oriC.

Its subcellular location is the cytoplasm. In terms of biological role, plays an essential role in the initiation and regulation of chromosomal replication. ATP-DnaA binds to the origin of replication (oriC) to initiate formation of the DNA replication initiation complex once per cell cycle. Binds the DnaA box (a 9 base pair repeat at the origin) and separates the double-stranded (ds)DNA. Forms a right-handed helical filament on oriC DNA; dsDNA binds to the exterior of the filament while single-stranded (ss)DNA is stabiized in the filament's interior. The ATP-DnaA-oriC complex binds and stabilizes one strand of the AT-rich DNA unwinding element (DUE), permitting loading of DNA polymerase. After initiation quickly degrades to an ADP-DnaA complex that is not apt for DNA replication. Binds acidic phospholipids. The protein is Chromosomal replication initiator protein DnaA of Thermosipho melanesiensis (strain DSM 12029 / CIP 104789 / BI429).